We begin with the raw amino-acid sequence, 361 residues long: tRNA-specific 2-thiouridylase MnmA (361 aa).

Residues 6 to 13 (AMSGGVDS) and Leu32 contribute to the ATP site. The active-site Nucleophile is Cys99. A disulfide bridge links Cys99 with Cys196. Gly123 contacts ATP. The tract at residues 145 to 147 (RDQ) is interaction with tRNA. The Cysteine persulfide intermediate role is filled by Cys196.

It belongs to the MnmA/TRMU family.

Its subcellular location is the cytoplasm. It carries out the reaction S-sulfanyl-L-cysteinyl-[protein] + uridine(34) in tRNA + AH2 + ATP = 2-thiouridine(34) in tRNA + L-cysteinyl-[protein] + A + AMP + diphosphate + H(+). Its function is as follows. Catalyzes the 2-thiolation of uridine at the wobble position (U34) of tRNA, leading to the formation of s(2)U34. The sequence is that of tRNA-specific 2-thiouridylase MnmA from Gluconobacter oxydans (strain 621H) (Gluconobacter suboxydans).